We begin with the raw amino-acid sequence, 431 residues long: Glutamate-1-semialdehyde 2,1-aminomutase (431 aa).

At Lys-269 the chain carries N6-(pyridoxal phosphate)lysine.

It belongs to the class-III pyridoxal-phosphate-dependent aminotransferase family. HemL subfamily. Homodimer. Pyridoxal 5'-phosphate serves as cofactor.

It is found in the cytoplasm. It carries out the reaction (S)-4-amino-5-oxopentanoate = 5-aminolevulinate. Its pathway is porphyrin-containing compound metabolism; protoporphyrin-IX biosynthesis; 5-aminolevulinate from L-glutamyl-tRNA(Glu): step 2/2. It participates in porphyrin-containing compound metabolism; chlorophyll biosynthesis. This Prosthecochloris aestuarii (strain DSM 271 / SK 413) protein is Glutamate-1-semialdehyde 2,1-aminomutase.